Here is a 120-residue protein sequence, read N- to C-terminus: Large ribosomal subunit protein bL20 (120 aa).

This sequence belongs to the bacterial ribosomal protein bL20 family.

Its function is as follows. Binds directly to 23S ribosomal RNA and is necessary for the in vitro assembly process of the 50S ribosomal subunit. It is not involved in the protein synthesizing functions of that subunit. The sequence is that of Large ribosomal subunit protein bL20 from Karelsulcia muelleri (strain GWSS) (Sulcia muelleri).